Consider the following 469-residue polypeptide: 3-isopropylmalate dehydratase large subunit (469 aa).

Residues C350, C410, and C413 each contribute to the [4Fe-4S] cluster site.

It belongs to the aconitase/IPM isomerase family. LeuC type 1 subfamily. Heterodimer of LeuC and LeuD. [4Fe-4S] cluster serves as cofactor.

It carries out the reaction (2R,3S)-3-isopropylmalate = (2S)-2-isopropylmalate. It functions in the pathway amino-acid biosynthesis; L-leucine biosynthesis; L-leucine from 3-methyl-2-oxobutanoate: step 2/4. In terms of biological role, catalyzes the isomerization between 2-isopropylmalate and 3-isopropylmalate, via the formation of 2-isopropylmaleate. This Rhodopseudomonas palustris (strain TIE-1) protein is 3-isopropylmalate dehydratase large subunit.